We begin with the raw amino-acid sequence, 218 residues long: 5-oxoprolinase subunit B (218 aa).

This sequence belongs to the PxpB family. In terms of assembly, forms a complex composed of PxpA, PxpB and PxpC.

It catalyses the reaction 5-oxo-L-proline + ATP + 2 H2O = L-glutamate + ADP + phosphate + H(+). Its function is as follows. Catalyzes the cleavage of 5-oxoproline to form L-glutamate coupled to the hydrolysis of ATP to ADP and inorganic phosphate. The chain is 5-oxoprolinase subunit B from Escherichia coli O157:H7.